Consider the following 159-residue polypeptide: NADH-quinone oxidoreductase subunit B (159 aa).

[4Fe-4S] cluster is bound by residues cysteine 32, cysteine 33, cysteine 97, and cysteine 126.

Belongs to the complex I 20 kDa subunit family. As to quaternary structure, NDH-1 is composed of 14 different subunits. Subunits NuoB, C, D, E, F, and G constitute the peripheral sector of the complex. Requires [4Fe-4S] cluster as cofactor.

The protein localises to the cell inner membrane. It carries out the reaction a quinone + NADH + 5 H(+)(in) = a quinol + NAD(+) + 4 H(+)(out). Functionally, NDH-1 shuttles electrons from NADH, via FMN and iron-sulfur (Fe-S) centers, to quinones in the respiratory chain. The immediate electron acceptor for the enzyme in this species is believed to be ubiquinone. Couples the redox reaction to proton translocation (for every two electrons transferred, four hydrogen ions are translocated across the cytoplasmic membrane), and thus conserves the redox energy in a proton gradient. This Helicobacter pylori (strain HPAG1) protein is NADH-quinone oxidoreductase subunit B.